A 287-amino-acid polypeptide reads, in one-letter code: MTLINKLKQHLSDSQITQAQLAREAGVNAGALSAYLNDNYKGNIADVEAKLAAYLEKKAVQAREFVEAPAFIETATSRQIFKTLEFAQIANCLATVYGMSGVGKTKAIQEFAKSHANVWLVTASPSRSSLSEILYEIALELGISDAPRRKGTLSRLIARKIKGTEGLLIVDEADHLPYEALEELRIMQEEAGIGLVLVGNDKVYTRMKGGISPSHEYARLWSRVAKNTSIQKTKKADTQAVAQAWGLETDEEALKVMQSITETGGGLRILTQTYACRNGSKRIWQVD.

The 56-residue stretch at 7–62 folds into the HTH cro/C1-type domain; that stretch reads LKQHLSDSQITQAQLAREAGVNAGALSAYLNDNYKGNIADVEAKLAAYLEKKAVQA. Residues 18-37 constitute a DNA-binding region (H-T-H motif); that stretch reads QAQLAREAGVNAGALSAYLN. 98–105 contributes to the ATP binding site; it reads GMSGVGKT.

This protein is a non-specific DNA-binding and ATP-hydrolyzing protein essential for bacteriophage integration and replication. The chain is Mu-like prophage FluMu DNA transposition protein B from Haemophilus influenzae (strain ATCC 51907 / DSM 11121 / KW20 / Rd).